The sequence spans 664 residues: Transketolase 1 (664 aa).

Histidine 26 is a binding site for substrate. Thiamine diphosphate-binding positions include histidine 66 and 114 to 116 (GPL). Residue aspartate 155 participates in Mg(2+) binding. Residues glycine 156 and asparagine 185 each coordinate thiamine diphosphate. Mg(2+) contacts are provided by asparagine 185 and isoleucine 187. Histidine 260, arginine 357, and serine 384 together coordinate substrate. Residue histidine 260 coordinates thiamine diphosphate. Glutamate 411 (proton donor) is an active-site residue. A thiamine diphosphate-binding site is contributed by phenylalanine 437. Histidine 461, aspartate 469, and arginine 520 together coordinate substrate.

Belongs to the transketolase family. In terms of assembly, homodimer. Mg(2+) serves as cofactor. Ca(2+) is required as a cofactor. It depends on Mn(2+) as a cofactor. The cofactor is Co(2+). Requires thiamine diphosphate as cofactor.

It catalyses the reaction D-sedoheptulose 7-phosphate + D-glyceraldehyde 3-phosphate = aldehydo-D-ribose 5-phosphate + D-xylulose 5-phosphate. Its function is as follows. Catalyzes the transfer of a two-carbon ketol group from a ketose donor to an aldose acceptor, via a covalent intermediate with the cofactor thiamine pyrophosphate. The protein is Transketolase 1 (tkt1) of Vibrio parahaemolyticus serotype O3:K6 (strain RIMD 2210633).